We begin with the raw amino-acid sequence, 423 residues long: MKAELIAVGTEILTGQIVNTNAQFLSEKMAELGIDVYFQTAVGDNEERLLSVITTASQRSDLVILCGGLGPTKDDLTKQTLAKYLRRDLVYDEQACQKLDDFFAKRKPSSRTPNNERQAQVIEGSIPLPNKTGLAVGGFITVDGISYVVLPGPPSELKPIVNEELVPLLSKQYSTLYSKVLRFFGIGESQLVTVLSDFIENQTDPTIAPYAKTGEVTLRLSTKTENQALADKKLGQLEAQLLSRKTLEGQPLADVFYGYGEDNSLARETFELLVKYDKSITAAESLTAGLFQSTLASFPGASQVFNGGFVTYSMEEKAKMLGLPLEELKSHGVVSAYTAEGMAEQARLLTGADIGVSLTGVAGPDMLEEQPAGTVFIGLATQNKVESIKVLISGRSRLDVCYIATLHAFNMVRKTLLKLENLL.

The protein belongs to the CinA family.

In Streptococcus pyogenes serotype M4 (strain MGAS10750), this protein is Putative competence-damage inducible protein.